The primary structure comprises 33 residues: Gastrin (33 aa).

2 positions are modified to pyrrolidone carboxylic acid: glutamine 1 and glutamine 18. Sulfotyrosine is present on tyrosine 28. A Phenylalanine amide modification is found at phenylalanine 33.

The protein belongs to the gastrin/cholecystokinin family.

The protein resides in the secreted. In terms of biological role, gastrin stimulates the stomach mucosa to produce and secrete hydrochloric acid and the pancreas to secrete its digestive enzymes. It also stimulates smooth muscle contraction and increases blood circulation and water secretion in the stomach and intestine. The chain is Gastrin (GAST) from Didelphis virginiana (North American opossum).